We begin with the raw amino-acid sequence, 689 residues long: Glycine--tRNA ligase beta subunit (689 aa).

It belongs to the class-II aminoacyl-tRNA synthetase family. Tetramer of two alpha and two beta subunits.

It localises to the cytoplasm. It carries out the reaction tRNA(Gly) + glycine + ATP = glycyl-tRNA(Gly) + AMP + diphosphate. This chain is Glycine--tRNA ligase beta subunit, found in Sodalis glossinidius (strain morsitans).